Here is a 256-residue protein sequence, read N- to C-terminus: MQYGRQILICIGILTVIILLLYGLLNSYWDRTVTFCKVRFNQLKNKFISQPLLSDHKENIAVSHIYKNDLFENNDIEYDPLLSKREADSYIIPSNNLACDNISAHKHIPLNNPKEIVLVLHVAAYNGTVLYGDSLWQSLLQTGLQFGEMNIFHRHLNPTGSGPVLFSLANMIKPGWFRFNSKNIATFTTPGVSMFMIIPSYGDANHNFKLMLQAAQQIADNCGGVVLDEEHHMLTPQKLDIYKARIRHVLSANKST.

The Periplasmic segment spans residues 1–6; that stretch reads MQYGRQ. Residues 7–27 form a helical membrane-spanning segment; the sequence is ILICIGILTVIILLLYGLLNS. Over 28–256 the chain is Cytoplasmic; sequence YWDRTVTFCK…RHVLSANKST (229 aa).

Belongs to the ZipA family. As to quaternary structure, interacts with FtsZ via their C-terminal domains.

It is found in the cell inner membrane. In terms of biological role, essential cell division protein that stabilizes the FtsZ protofilaments by cross-linking them and that serves as a cytoplasmic membrane anchor for the Z ring. Also required for the recruitment to the septal ring of downstream cell division proteins. This Baumannia cicadellinicola subsp. Homalodisca coagulata protein is Cell division protein ZipA.